Here is a 258-residue protein sequence, read N- to C-terminus: UPF0246 protein PM0066 (258 aa).

This sequence belongs to the UPF0246 family.

In Pasteurella multocida (strain Pm70), this protein is UPF0246 protein PM0066.